Reading from the N-terminus, the 168-residue chain is WAP four-disulfide core domain protein 2 (168 aa).

The first 30 residues, 1-30, serve as a signal peptide directing secretion; it reads MPACRLCLLATGLLLGLLLFTPLSATGTRA. 2 consecutive WAP domains span residues 31–74 and 119–167; these read EKPG…SKPN and NGEK…TTPK. 4 cysteine pairs are disulfide-bonded: Cys36/Cys62, Cys45/Cys66, Cys49/Cys61, and Cys55/Cys70. The interval 100–123 is disordered; the sequence is PLSRGQVSTKPPVVTKEGGNGEKQ. Disulfide bonds link Cys126/Cys154, Cys137/Cys158, Cys141/Cys153, and Cys147/Cys163.

Homotrimer; disulfide-linked.

The protein localises to the secreted. Broad range protease inhibitor. The chain is WAP four-disulfide core domain protein 2 (Wfdc2) from Rattus norvegicus (Rat).